Consider the following 873-residue polypeptide: Leucine--tRNA ligase (873 aa).

The short motif at 42-52 is the 'HIGH' region element; sequence PYPSGKLHMGH. The interval 624–643 is disordered; sequence PVEIGGTEKMSKSKNNGVDP. A 'KMSKS' region motif is present at residues 632–636; sequence KMSKS. K635 is a binding site for ATP.

This sequence belongs to the class-I aminoacyl-tRNA synthetase family.

Its subcellular location is the cytoplasm. The enzyme catalyses tRNA(Leu) + L-leucine + ATP = L-leucyl-tRNA(Leu) + AMP + diphosphate. The chain is Leucine--tRNA ligase from Pseudomonas aeruginosa (strain ATCC 15692 / DSM 22644 / CIP 104116 / JCM 14847 / LMG 12228 / 1C / PRS 101 / PAO1).